Consider the following 77-residue polypeptide: Acyl carrier protein (77 aa).

The Carrier domain occupies 3–77 (QEIFEKVKKI…GKAVEHIESK (75 aa)). At serine 38 the chain carries O-(pantetheine 4'-phosphoryl)serine.

It belongs to the acyl carrier protein (ACP) family. 4'-phosphopantetheine is transferred from CoA to a specific serine of apo-ACP by AcpS. This modification is essential for activity because fatty acids are bound in thioester linkage to the sulfhydryl of the prosthetic group.

The protein resides in the cytoplasm. Its pathway is lipid metabolism; fatty acid biosynthesis. In terms of biological role, carrier of the growing fatty acid chain in fatty acid biosynthesis. This is Acyl carrier protein from Synechocystis sp. (strain ATCC 27184 / PCC 6803 / Kazusa).